Here is a 322-residue protein sequence, read N- to C-terminus: Undecaprenyl-phosphate 4-deoxy-4-formamido-L-arabinose transferase (322 aa).

Residues 1–235 (MFEIHPVKKV…TCLTTTPLRM (235 aa)) lie on the Cytoplasmic side of the membrane. A helical membrane pass occupies residues 236–256 (LSLLGSIIAIGGFSIAVLLVI). At 257–269 (LRLTFGPQWAAEG) the chain is on the periplasmic side. Residues 270-290 (VFMLFAVLFTFIGAQFIGMGL) form a helical membrane-spanning segment. The Cytoplasmic portion of the chain corresponds to 291–322 (LGEYIGRIYTDVRARPRYFVQQVIRPSSKENE).

This sequence belongs to the glycosyltransferase 2 family.

Its subcellular location is the cell inner membrane. It catalyses the reaction UDP-4-deoxy-4-formamido-beta-L-arabinose + di-trans,octa-cis-undecaprenyl phosphate = 4-deoxy-4-formamido-alpha-L-arabinopyranosyl di-trans,octa-cis-undecaprenyl phosphate + UDP. The protein operates within glycolipid biosynthesis; 4-amino-4-deoxy-alpha-L-arabinose undecaprenyl phosphate biosynthesis; 4-amino-4-deoxy-alpha-L-arabinose undecaprenyl phosphate from UDP-4-deoxy-4-formamido-beta-L-arabinose and undecaprenyl phosphate: step 1/2. It functions in the pathway bacterial outer membrane biogenesis; lipopolysaccharide biosynthesis. Catalyzes the transfer of 4-deoxy-4-formamido-L-arabinose from UDP to undecaprenyl phosphate. The modified arabinose is attached to lipid A and is required for resistance to polymyxin and cationic antimicrobial peptides. The sequence is that of Undecaprenyl-phosphate 4-deoxy-4-formamido-L-arabinose transferase from Escherichia coli O139:H28 (strain E24377A / ETEC).